Here is a 198-residue protein sequence, read N- to C-terminus: Protein GrpE (198 aa).

Positions 1–14 (MSNEENKINEEALK) are enriched in basic and acidic residues. A disordered region spans residues 1 to 20 (MSNEENKINEEALKQQDAAE).

It belongs to the GrpE family. In terms of assembly, homodimer.

It is found in the cytoplasm. Functionally, participates actively in the response to hyperosmotic and heat shock by preventing the aggregation of stress-denatured proteins, in association with DnaK and GrpE. It is the nucleotide exchange factor for DnaK and may function as a thermosensor. Unfolded proteins bind initially to DnaJ; upon interaction with the DnaJ-bound protein, DnaK hydrolyzes its bound ATP, resulting in the formation of a stable complex. GrpE releases ADP from DnaK; ATP binding to DnaK triggers the release of the substrate protein, thus completing the reaction cycle. Several rounds of ATP-dependent interactions between DnaJ, DnaK and GrpE are required for fully efficient folding. This chain is Protein GrpE, found in Vibrio vulnificus (strain YJ016).